We begin with the raw amino-acid sequence, 331 residues long: Decarboxylase orsB (331 aa).

Zn(2+) contacts are provided by H11, H157, and D284.

This sequence belongs to the metallo-dependent hydrolases superfamily. ACMSD family.

It participates in secondary metabolite biosynthesis. In terms of biological role, decarboxylase; part of the gene cluster that mediates the biosynthesis of orsellinic acid, as well as of the cathepsin K inhibitors F9775 A and F9775 B. The non-reducing polyketide synthase orsA produces orsellinic acid by condensing acetyl-CoA with 3 malonyl-CoA units. Further modifications by the decarboxylase orsB and the tyrosinase-like protein orsC lead to the production of F9775 A and F9775 B. The functions of orsD and orsE remain unclear since only orsB and orsC are required to convert orsellinic acid into F9775 A and F9775 B. In Emericella nidulans (strain FGSC A4 / ATCC 38163 / CBS 112.46 / NRRL 194 / M139) (Aspergillus nidulans), this protein is Decarboxylase orsB.